The following is a 257-amino-acid chain: uncharacterized protein (257 aa).

Asn61, Asn95, Asn102, Asn111, Asn139, Asn148, and Asn152 each carry an N-linked (GlcNAc...) asparagine; by host glycan. The helical transmembrane segment at 233-253 threads the bilayer; that stretch reads WYIIGGIFWVIVLIILVIFII.

Its subcellular location is the host membrane. The protein localises to the virion. This is an uncharacterized protein from Acanthamoeba polyphaga (Amoeba).